The following is a 183-amino-acid chain: Ras-related protein Rap-2c (183 aa).

10 to 17 (GSGGVGKS) is a GTP binding site. The Effector region motif lies at 32–40 (YDPTIEDFY). GTP contacts are provided by residues 57–61 (DTAGT) and 116–119 (NKVD). Residues cysteine 176 and cysteine 177 are each lipidated (S-palmitoyl cysteine). Position 180 is a cysteine methyl ester (cysteine 180). Cysteine 180 carries the S-geranylgeranyl cysteine lipid modification. Residues 181–183 (VVQ) constitute a propeptide, removed in mature form.

Belongs to the small GTPase superfamily. Ras family. Post-translationally, palmitoylated. Palmitoylation is required for association with recycling endosome membranes and activation of TNIK.

It is found in the cytoplasm. The protein resides in the recycling endosome membrane. The enzyme catalyses GTP + H2O = GDP + phosphate + H(+). In terms of biological role, small GTP-binding protein which cycles between a GDP-bound inactive and a GTP-bound active form. May play a role in cytoskeletal rearrangements and regulate cell spreading through activation of the effector TNIK. May play a role in SRE-mediated gene transcription. In Bos taurus (Bovine), this protein is Ras-related protein Rap-2c (RAP2C).